A 360-amino-acid polypeptide reads, in one-letter code: tRNA pseudouridine synthase D (360 aa).

Asp-76 acts as the Nucleophile in catalysis. The TRUD domain maps to 151–332 (GMPNFFGYQR…HGIYKEKNAW (182 aa)).

Belongs to the pseudouridine synthase TruD family.

It carries out the reaction uridine(13) in tRNA = pseudouridine(13) in tRNA. In terms of biological role, responsible for synthesis of pseudouridine from uracil-13 in transfer RNAs. This chain is tRNA pseudouridine synthase D, found in Nitratiruptor sp. (strain SB155-2).